A 734-amino-acid chain; its full sequence is Ribosomal RNA large subunit methyltransferase K/L (734 aa).

A THUMP domain is found at 49–167; that stretch reads QAYRVCMWSR…KTEHTYCLDL (119 aa).

It belongs to the methyltransferase superfamily. RlmKL family.

Its subcellular location is the cytoplasm. The enzyme catalyses guanosine(2445) in 23S rRNA + S-adenosyl-L-methionine = N(2)-methylguanosine(2445) in 23S rRNA + S-adenosyl-L-homocysteine + H(+). It catalyses the reaction guanosine(2069) in 23S rRNA + S-adenosyl-L-methionine = N(2)-methylguanosine(2069) in 23S rRNA + S-adenosyl-L-homocysteine + H(+). In terms of biological role, specifically methylates the guanine in position 2445 (m2G2445) and the guanine in position 2069 (m7G2069) of 23S rRNA. This Acinetobacter baylyi (strain ATCC 33305 / BD413 / ADP1) protein is Ribosomal RNA large subunit methyltransferase K/L.